The following is a 165-amino-acid chain: E3 ubiquitin-protein ligase RNF181 (165 aa).

The RING-type; atypical zinc-finger motif lies at 88–129 (CPVCLLEFEAEETVIEMPCHHLFHSNCILPWLSKTNSCPLCR). The interval 136–165 (DDSYEEHKKDKARRQQQQHRLENLHGAMYT) is disordered. Thr-165 is modified (phosphothreonine).

It belongs to the RNF181 family. Directly interacts with ITGA2B and, as a result, with integrin ITGA2B/ITGB3. There is no evidence that integrin ITGA2B/ITGB3 is an endogenous substrate for RNF181-directed ubiquitination. Auto-ubiquitinated as part of the enzymatic reaction.

The catalysed reaction is S-ubiquitinyl-[E2 ubiquitin-conjugating enzyme]-L-cysteine + [acceptor protein]-L-lysine = [E2 ubiquitin-conjugating enzyme]-L-cysteine + N(6)-ubiquitinyl-[acceptor protein]-L-lysine.. Its pathway is protein modification; protein ubiquitination. In terms of biological role, E3 ubiquitin-protein ligase which accepts ubiquitin from an E2 ubiquitin-conjugating enzyme in the form of a thioester and then directly transfers the ubiquitin to targeted substrates. Catalyzes monoubiquitination of 26S proteasome subunit PSMC2/RPT1. This Mus musculus (Mouse) protein is E3 ubiquitin-protein ligase RNF181.